Here is a 72-residue protein sequence, read N- to C-terminus: UPF0154 protein LBA1278 (72 aa).

A helical membrane pass occupies residues 3-23 (LGLAIFLIIIALLVGATAGFY).

Belongs to the UPF0154 family.

The protein resides in the cell membrane. In Lactobacillus acidophilus (strain ATCC 700396 / NCK56 / N2 / NCFM), this protein is UPF0154 protein LBA1278.